A 273-amino-acid polypeptide reads, in one-letter code: Eukaryotic translation initiation factor 3 subunit G-2 (273 aa).

The RRM domain occupies 193–271 (SAVRISNLSE…LILCVEWSKP (79 aa)).

The protein belongs to the eIF-3 subunit G family. Component of the eukaryotic translation initiation factor 3 (eIF-3) complex. The eIF-3 complex interacts with pix.

The protein resides in the cytoplasm. RNA-binding component of the eukaryotic translation initiation factor 3 (eIF-3) complex, which is involved in protein synthesis of a specialized repertoire of mRNAs and, together with other initiation factors, stimulates binding of mRNA and methionyl-tRNAi to the 40S ribosome. The eIF-3 complex specifically targets and initiates translation of a subset of mRNAs involved in cell proliferation. This subunit can bind 18S rRNA. This Drosophila simulans (Fruit fly) protein is Eukaryotic translation initiation factor 3 subunit G-2.